The sequence spans 306 residues: Mitochondrial uncoupling protein 1 (306 aa).

Solcar repeat units follow at residues 9 to 102 (LSLP…VKNL), 112 to 203 (VPLS…VKET), and 212 to 296 (DNVV…AKKY). 6 helical membrane passes run 15-35 (FACSAFAACVGEVCTIPLDTA), 71-91 (LRSLWKGVVPGLHRQCLFGGL), 118-138 (ILAGLTTGALGIMVANPTDLV), 177-197 (TGLGPNVARNAIINAAELASY), 218-238 (ILSGLGAGFFAVCIGSPVDVV), and 269-289 (YKGFIPNFGRLGSWNVIMFLT).

This sequence belongs to the mitochondrial carrier (TC 2.A.29) family. In terms of tissue distribution, widely expressed.

The protein localises to the mitochondrion inner membrane. Functionally, PUMPS are mitochondrial transporter proteins that create proton leaks across the inner mitochondrial membrane, thus uncoupling oxidative phosphorylation. This leads to a decrease in the efficiency of oxidative phosphorylation and an increase in heat production. Is involved in protecting plant cells against oxidative stress damage and maintaining the redox balance of the mitochondrial electron transport chain to facilitate photosynthetic metabolism. May play a regulatory role during photorespiration. This is Mitochondrial uncoupling protein 1 (PUMP1) from Arabidopsis thaliana (Mouse-ear cress).